A 179-amino-acid chain; its full sequence is Acireductone dioxygenase (179 aa).

Fe(2+)-binding residues include His-97, His-99, Glu-103, and His-141. Ni(2+) is bound by residues His-97, His-99, Glu-103, and His-141.

Belongs to the acireductone dioxygenase (ARD) family. In terms of assembly, monomer. It depends on Fe(2+) as a cofactor. The cofactor is Ni(2+).

The catalysed reaction is 1,2-dihydroxy-5-(methylsulfanyl)pent-1-en-3-one + O2 = 3-(methylsulfanyl)propanoate + CO + formate + 2 H(+). It carries out the reaction 1,2-dihydroxy-5-(methylsulfanyl)pent-1-en-3-one + O2 = 4-methylsulfanyl-2-oxobutanoate + formate + 2 H(+). It participates in amino-acid biosynthesis; L-methionine biosynthesis via salvage pathway; L-methionine from S-methyl-5-thio-alpha-D-ribose 1-phosphate: step 5/6. Functionally, catalyzes 2 different reactions between oxygen and the acireductone 1,2-dihydroxy-3-keto-5-methylthiopentene (DHK-MTPene) depending upon the metal bound in the active site. Fe-containing acireductone dioxygenase (Fe-ARD) produces formate and 2-keto-4-methylthiobutyrate (KMTB), the alpha-ketoacid precursor of methionine in the methionine recycle pathway. Ni-containing acireductone dioxygenase (Ni-ARD) produces methylthiopropionate, carbon monoxide and formate, and does not lie on the methionine recycle pathway. This is Acireductone dioxygenase from Granulibacter bethesdensis (strain ATCC BAA-1260 / CGDNIH1).